A 190-amino-acid polypeptide reads, in one-letter code: Ribonuclease HII (190 aa).

In terms of domain architecture, RNase H type-2 spans K3–K190. Positions 9, 10, and 101 each coordinate a divalent metal cation.

Belongs to the RNase HII family. Mn(2+) serves as cofactor. It depends on Mg(2+) as a cofactor.

It localises to the cytoplasm. The enzyme catalyses Endonucleolytic cleavage to 5'-phosphomonoester.. Functionally, endonuclease that specifically degrades the RNA of RNA-DNA hybrids. The sequence is that of Ribonuclease HII from Alteromonas mediterranea (strain DSM 17117 / CIP 110805 / LMG 28347 / Deep ecotype).